The primary structure comprises 608 residues: Albumin (608 aa).

A signal peptide spans 1 to 18 (MKWVTFISLFFLFSSAYS). The propeptide occupies 19–24 (RGLVRR). Albumin domains follow at residues 19–210 (RGLV…EALR), 211–403 (EKVL…EFKP), and 404–601 (LVDE…KLVA). Residue serine 29 is modified to Phosphoserine. Residues glutamate 30 and aspartate 37 each contribute to the Ca(2+) site. Cysteines 77 and 86 form a disulfide. Serine 82 and serine 89 each carry phosphoserine. Histidine 91 is a Zn(2+) binding site. 6 disulfide bridges follow: cysteine 99-cysteine 115, cysteine 114-cysteine 125, cysteine 148-cysteine 193, cysteine 192-cysteine 201, cysteine 224-cysteine 270, and cysteine 269-cysteine 277. Lysine 229 bears the N6-succinyllysine mark. A Ca(2+)-binding site is contributed by glutamate 268. Zn(2+) is bound by residues histidine 271 and aspartate 273. Residues aspartate 273, glutamate 276, aspartate 279, and aspartate 283 each coordinate Ca(2+). Intrachain disulfides connect cysteine 289/cysteine 303, cysteine 302/cysteine 313, cysteine 340/cysteine 385, cysteine 384/cysteine 393, cysteine 416/cysteine 462, cysteine 461/cysteine 472, cysteine 485/cysteine 501, and cysteine 500/cysteine 511. Serine 443 carries the post-translational modification Phosphoserine. Phosphothreonine is present on residues threonine 444 and threonine 446. At lysine 460 the chain carries N6-succinyllysine. Position 513 is a phosphoserine (serine 513). Disulfide bonds link cysteine 538-cysteine 583 and cysteine 582-cysteine 591. N6-methyllysine is present on lysine 558. Phosphothreonine is present on threonine 570. The residue at position 588 (lysine 588) is an N6-succinyllysine.

This sequence belongs to the ALB/AFP/VDB family. In terms of assembly, interacts with FCGRT; this interaction regulates ALB homeostasis. Interacts with TASOR. In plasma, occurs in a covalently-linked complex with chromophore-bound alpha-1-microglobulin; this interaction does not prevent fatty acid binding to ALB. Phosphorylated by FAM20C in the extracellular medium. As to expression, plasma.

The protein resides in the secreted. Functionally, binds water, Ca(2+), Na(+), K(+), fatty acids, hormones, bilirubin and drugs. Its main function is the regulation of the colloidal osmotic pressure of blood. Major zinc transporter in plasma, typically binds about 80% of all plasma zinc. Major calcium and magnesium transporter in plasma, binds approximately 45% of circulating calcium and magnesium in plasma. Potentially has more than two calcium-binding sites and might additionally bind calcium in a non-specific manner. The shared binding site between zinc and calcium at residue Asp-273 suggests a crosstalk between zinc and calcium transport in the blood. The rank order of affinity is zinc &gt; calcium &gt; magnesium. Binds to the bacterial siderophore enterobactin and inhibits enterobactin-mediated iron uptake of E.coli from ferric transferrin, and may thereby limit the utilization of iron and growth of enteric bacteria such as E.coli. Does not prevent iron uptake by the bacterial siderophore aerobactin. The sequence is that of Albumin (ALB) from Canis lupus familiaris (Dog).